The sequence spans 268 residues: Mediator of RNA polymerase II transcription subunit 18 (268 aa).

This sequence belongs to the Mediator complex subunit 18 family. Component of the Mediator complex.

The protein localises to the nucleus. Its function is as follows. Component of the Mediator complex, a coactivator involved in the regulated transcription of nearly all RNA polymerase II-dependent genes. Mediator functions as a bridge to convey information from gene-specific regulatory proteins to the basal RNA polymerase II transcription machinery. Mediator is recruited to promoters by direct interactions with regulatory proteins and serves as a scaffold for the assembly of a functional preinitiation complex with RNA polymerase II and the general transcription factors. The chain is Mediator of RNA polymerase II transcription subunit 18 (srb5) from Neosartorya fischeri (strain ATCC 1020 / DSM 3700 / CBS 544.65 / FGSC A1164 / JCM 1740 / NRRL 181 / WB 181) (Aspergillus fischerianus).